A 157-amino-acid chain; its full sequence is MRSILILLSLLLTIAFASASFPYQCGPYSCQFGQVCRIDNGVCNCIPINDCHEVSLSTKVVGTWVDGSRGNKRFTQYDITITNNLNTNIKQIYIATDYTLRLRDHSNTSIWNVNLLPNGILTLPSYQPSINAHASFTFGFILEGTQPANLNVLSVSF.

The first 19 residues, methionine 1–alanine 19, serve as a signal peptide directing secretion.

It is found in the secreted. This chain is Stalk-specific protein A (staA), found in Dictyostelium discoideum (Social amoeba).